A 352-amino-acid polypeptide reads, in one-letter code: Inner membrane protein YeeA (352 aa).

The Cytoplasmic segment spans residues Met1–Arg25. The next 2 membrane-spanning stretches (helical) occupy residues Val26–Thr46 and Trp47–Pro67. Position 68 (Arg68) is a topological domain, cytoplasmic. The chain crosses the membrane as a helical span at residues Ala69–Leu89. Glu90 is a topological domain (periplasmic). Residues Leu91–Leu111 form a helical membrane-spanning segment. The Cytoplasmic portion of the chain corresponds to Ala112–Pro117. A helical transmembrane segment spans residues Tyr118–Ile138. Residues Asp139–Asp147 lie on the Periplasmic side of the membrane. The helical transmembrane segment at Val148–Ile168 threads the bilayer. The Cytoplasmic portion of the chain corresponds to His169–Lys352.

It localises to the cell inner membrane. The protein is Inner membrane protein YeeA (yeeA) of Escherichia coli (strain K12).